The sequence spans 226 residues: Ribose-5-phosphate isomerase A (226 aa).

Residues 28–31 (TGST), 84–87 (DGAD), and 97–100 (KGLG) contribute to the substrate site. Catalysis depends on Glu-106, which acts as the Proton acceptor. Lys-124 provides a ligand contact to substrate.

It belongs to the ribose 5-phosphate isomerase family. Homodimer.

It carries out the reaction aldehydo-D-ribose 5-phosphate = D-ribulose 5-phosphate. The protein operates within carbohydrate degradation; pentose phosphate pathway; D-ribose 5-phosphate from D-ribulose 5-phosphate (non-oxidative stage): step 1/1. Functionally, catalyzes the reversible conversion of ribose-5-phosphate to ribulose 5-phosphate. This is Ribose-5-phosphate isomerase A from Deinococcus radiodurans (strain ATCC 13939 / DSM 20539 / JCM 16871 / CCUG 27074 / LMG 4051 / NBRC 15346 / NCIMB 9279 / VKM B-1422 / R1).